Consider the following 305-residue polypeptide: Fe-S cluster assembly protein dre2 (305 aa).

Residues 21-150 (DATQKRTLLL…EKPQYQEAAV (130 aa)) form an N-terminal SAM-like domain region. Residues 151-195 (PLRFGLKKKNKVAPEPVKVESVGFVDNYDDDELIDEDDLLAEEDL) form a linker region. The [2Fe-2S] cluster site is built by cysteine 205, cysteine 217, cysteine 220, and cysteine 222. The fe-S binding site A stretch occupies residues 205–222 (CKPDIAKKRRRACKDCTC). Residues cysteine 268, cysteine 271, cysteine 279, and cysteine 282 each contribute to the [4Fe-4S] cluster site. 2 consecutive short sequence motifs (cx2C motif) follow at residues 268–271 (CNSC) and 279–282 (CEGC). The segment at 268-282 (CNSCSLGDAFRCEGC) is fe-S binding site B.

The protein belongs to the anamorsin family. In terms of assembly, monomer. Interacts with tah18. Interacts with mia40. It depends on [2Fe-2S] cluster as a cofactor. [4Fe-4S] cluster serves as cofactor.

The protein localises to the cytoplasm. Its subcellular location is the mitochondrion intermembrane space. Functionally, component of the cytosolic iron-sulfur (Fe-S) protein assembly (CIA) machinery required for the maturation of extramitochondrial Fe-S proteins. Part of an electron transfer chain functioning in an early step of cytosolic Fe-S biogenesis, facilitating the de novo assembly of a [4Fe-4S] cluster on the scaffold complex cfd1-nbp35. Electrons are transferred to dre2 from NADPH via the FAD- and FMN-containing protein tah18. Tah18-dre2 are also required for the assembly of the diferric tyrosyl radical cofactor of ribonucleotide reductase (RNR), probably by providing electrons for reduction during radical cofactor maturation in the catalytic small subunit rnr2. The sequence is that of Fe-S cluster assembly protein dre2 from Talaromyces marneffei (strain ATCC 18224 / CBS 334.59 / QM 7333) (Penicillium marneffei).